The following is a 335-amino-acid chain: Endo-beta-N-acetylglucosaminidase F2 (335 aa).

Positions 1-45 are cleaved as a signal peptide; the sequence is MKTANFSFALCLSVVIMLFIKCTRSEQDLSVTKDAIAQKSGVTVS. Residues 61–321 enclose the GH18 domain; the sequence is QISAGYYRTW…SSNDNTLRAP (261 aa). O-linked (Man...) serine glycans are attached at residues serine 73, serine 89, and serine 143. Glutamate 171 acts as the Proton donor in catalysis.

This sequence belongs to the glycosyl hydrolase 18 family. As to quaternary structure, monomer. In terms of processing, carbohydrates at Ser-73, Ser-89 and Ser-143 consist of (2-OMe)Man1-4GlcNAcU1-4GlcU1-4Glc1-4(2-OMe)GlcU1-4[(2-OMe)Rham1-2]Man.

The protein localises to the secreted. It carries out the reaction an N(4)-(oligosaccharide-(1-&gt;3)-[oligosaccharide-(1-&gt;6)]-beta-D-Man-(1-&gt;4)-beta-D-GlcNAc-(1-&gt;4)-alpha-D-GlcNAc)-L-asparaginyl-[protein] + H2O = an oligosaccharide-(1-&gt;3)-[oligosaccharide-(1-&gt;6)]-beta-D-Man-(1-&gt;4)-D-GlcNAc + N(4)-(N-acetyl-beta-D-glucosaminyl)-L-asparaginyl-[protein]. Endohydrolysis of the di-N-acetylchitobiosyl unit in high-mannose glycopeptides and glycoproteins. Complex biantennary glycans are the preferred substrates. Tri- and tetraantennary glycans are not hydrolyzed, and high mannose glycans are very poor substrates. This chain is Endo-beta-N-acetylglucosaminidase F2 (endOF2), found in Elizabethkingia meningoseptica (Chryseobacterium meningosepticum).